The following is a 179-amino-acid chain: Protein GrpE (179 aa).

The tract at residues 1 to 29 (MQDQDKYAEQAASIEDPVTAEAASATTPT) is disordered.

It belongs to the GrpE family. As to quaternary structure, homodimer.

The protein localises to the cytoplasm. In terms of biological role, participates actively in the response to hyperosmotic and heat shock by preventing the aggregation of stress-denatured proteins, in association with DnaK and GrpE. It is the nucleotide exchange factor for DnaK and may function as a thermosensor. Unfolded proteins bind initially to DnaJ; upon interaction with the DnaJ-bound protein, DnaK hydrolyzes its bound ATP, resulting in the formation of a stable complex. GrpE releases ADP from DnaK; ATP binding to DnaK triggers the release of the substrate protein, thus completing the reaction cycle. Several rounds of ATP-dependent interactions between DnaJ, DnaK and GrpE are required for fully efficient folding. The polypeptide is Protein GrpE (Janthinobacterium sp. (strain Marseille) (Minibacterium massiliensis)).